The primary structure comprises 375 residues: Probable pectin lyase B (375 aa).

Residues 1 to 19 (MKYAAFLPTIGALVSQAIA) form the signal peptide. 2 cysteine pairs are disulfide-bonded: C82/C101 and C91/C225. The N-linked (GlcNAc...) asparagine glycan is linked to N128. The active site involves R255. Cysteines 321 and 329 form a disulfide.

This sequence belongs to the polysaccharide lyase 1 family.

Its subcellular location is the secreted. It carries out the reaction Eliminative cleavage of (1-&gt;4)-alpha-D-galacturonan methyl ester to give oligosaccharides with 4-deoxy-6-O-methyl-alpha-D-galact-4-enuronosyl groups at their non-reducing ends.. Pectinolytic enzymes consist of four classes of enzymes: pectin lyase, polygalacturonase, pectin methylesterase and rhamnogalacturonase. Among pectinolytic enzymes, pectin lyase is the most important in depolymerization of pectin, since it cleaves internal glycosidic bonds of highly methylated pectins. In Aspergillus fumigatus (strain CBS 144.89 / FGSC A1163 / CEA10) (Neosartorya fumigata), this protein is Probable pectin lyase B (pelB).